The chain runs to 133 residues: MIKAWFDTNKYVAMHMQTEPFVYIKIICIKEEERPHNSTHTHTHTLSHTQFEIAPIGLGNRITSHSKYTIFSITHTHCIKPFVSKKYKNTAQRAVSGSICDCLFFFWFSSVQNEGSKNFQIKQYSSPEICFRV.

This is an uncharacterized protein from Saccharomyces cerevisiae (strain ATCC 204508 / S288c) (Baker's yeast).